Here is a 492-residue protein sequence, read N- to C-terminus: Bifunctional purine biosynthesis protein PurH (492 aa).

In terms of domain architecture, MGS-like spans 1-144 (MKKAILSVSN…KNYKHVTTIV (144 aa)).

Belongs to the PurH family.

It carries out the reaction (6R)-10-formyltetrahydrofolate + 5-amino-1-(5-phospho-beta-D-ribosyl)imidazole-4-carboxamide = 5-formamido-1-(5-phospho-D-ribosyl)imidazole-4-carboxamide + (6S)-5,6,7,8-tetrahydrofolate. The catalysed reaction is IMP + H2O = 5-formamido-1-(5-phospho-D-ribosyl)imidazole-4-carboxamide. The protein operates within purine metabolism; IMP biosynthesis via de novo pathway; 5-formamido-1-(5-phospho-D-ribosyl)imidazole-4-carboxamide from 5-amino-1-(5-phospho-D-ribosyl)imidazole-4-carboxamide (10-formyl THF route): step 1/1. Its pathway is purine metabolism; IMP biosynthesis via de novo pathway; IMP from 5-formamido-1-(5-phospho-D-ribosyl)imidazole-4-carboxamide: step 1/1. In Staphylococcus aureus (strain USA300), this protein is Bifunctional purine biosynthesis protein PurH.